We begin with the raw amino-acid sequence, 241 residues long: Deoxynucleotide monophosphate kinase (241 aa).

K10 serves as a coordination point for dGMP. Residues R11, G13, D15, and T16 each coordinate ATP. DGMP-binding residues include I36 and K37. Y42 provides a ligand contact to Mg(2+). R68 contributes to the dGMP binding site. Q85 and E108 together coordinate Mg(2+). The dGMP site is built by R132, G139, T140, V144, W152, D175, R177, Q178, E181, and T208.

This sequence belongs to the dNMP kinase family. As to quaternary structure, homodimer. Mg(2+) is required as a cofactor.

It catalyses the reaction dTMP + ATP = dTDP + ADP. The enzyme catalyses dGMP + ATP = dGDP + ADP. The catalysed reaction is 5-hydroxymethyl-dCMP + ATP = 5-hydroxymethyl-dCDP + ADP. With respect to regulation, inhibited by pyridoxal 5'-phosphate and diethylpyrocarbonate. In terms of biological role, allows the synthesis of deoxyribonucleoside triphosphates necessary for the rapid viral DNA replication. Phosphorylates dGMP, dTMP and 5-hydroxymethyl-dCMP (hmdCMP) while excluding dCMP and dAMP. The phosphorylation of 5-hydroxymethyl-dCMP represents the first step in the replacement of cytosine by hydroxymethylcytosine in new viral DNA genomes. This Enterobacteria phage T4 (Bacteriophage T4) protein is Deoxynucleotide monophosphate kinase (1).